Reading from the N-terminus, the 936-residue chain is UPF0746 protein DDB_G0280787 (936 aa).

A compositionally biased stretch (basic and acidic residues) spans 1–19; it reads MISNKRKEIDTIDGHHEKD. The segment at 1–30 is disordered; the sequence is MISNKRKEIDTIDGHHEKDNDDDDSDGIDN. Residues 44-78 form the SAP domain; it reads SGSTNYRELQIIAKSLGLASNGKKQLVYNRIEGYF. Residues 91-110 form a disordered region; sequence ETNQQEEKKEEEQQQPQPQE.

The protein belongs to the UPF0746 family.

The polypeptide is UPF0746 protein DDB_G0280787 (Dictyostelium discoideum (Social amoeba)).